The chain runs to 362 residues: Protein-glutamate methylesterase/protein-glutamine glutaminase 1 (362 aa).

Positions R10–E127 constitute a Response regulatory domain. D61 is subject to 4-aspartylphosphate. Residues P163–I357 form the CheB-type methylesterase domain. Residues S181, H208, and D306 contribute to the active site.

Belongs to the CheB family. In terms of processing, phosphorylated by CheA. Phosphorylation of the N-terminal regulatory domain activates the methylesterase activity.

The protein resides in the cytoplasm. It carries out the reaction [protein]-L-glutamate 5-O-methyl ester + H2O = L-glutamyl-[protein] + methanol + H(+). The enzyme catalyses L-glutaminyl-[protein] + H2O = L-glutamyl-[protein] + NH4(+). Its function is as follows. Involved in chemotaxis. Part of a chemotaxis signal transduction system that modulates chemotaxis in response to various stimuli. Catalyzes the demethylation of specific methylglutamate residues introduced into the chemoreceptors (methyl-accepting chemotaxis proteins or MCP) by CheR. Also mediates the irreversible deamidation of specific glutamine residues to glutamic acid. This is Protein-glutamate methylesterase/protein-glutamine glutaminase 1 from Geobacter sulfurreducens (strain ATCC 51573 / DSM 12127 / PCA).